The chain runs to 226 residues: Guanylate kinase (226 aa).

One can recognise a Guanylate kinase-like domain in the interval 13–193 (GLLLVLSAPS…ALAQLQAIVR (181 aa)). 20-27 (APSGAGKT) serves as a coordination point for ATP.

The protein belongs to the guanylate kinase family.

It is found in the cytoplasm. It carries out the reaction GMP + ATP = GDP + ADP. Essential for recycling GMP and indirectly, cGMP. The sequence is that of Guanylate kinase from Anaeromyxobacter dehalogenans (strain 2CP-C).